The following is a 476-amino-acid chain: MEFSAETLRQQLGKYKFRDLTIEELKDLNRTFPSFIFSMETYTFRDGSQKDLLNLTGTVPMKHQGTTYNIPICLWILDSHPFAPPLCFLKPSGNMGIRVGRHIDAQGRIYLPYLQNWSHPKSTVTGLIREMAVKFEEELPLYSLSAEDGARQRELLSYIAQVTDGVSSMDVKAPSRAKVTVIGGGDMALACLLAVSAKGTAGKLLLLDPTDGEAAGGAAADLEIFSLPNVQVTKDFSAIAGSAIVIVTVNSWSNSQSYVGVLQSNVELLRGILPAVAHHCPKCLLLVASQPVEIMTYATWKLSGFPHNRVLGIGCNLDSGRFRHVIEKLADSEEGAQGAWIIGEQSDNKVAVWGAPDSSANRQTPCKLYPKIFQEQLTSRALEILKGKGQRSWSVGLSVADITDTLVQNKGKVHSVSALCKGQFGVQEEVFLSIPCVLGSAGVTGAVQTLQDEAQIWETLQRSAAAIESVQQQLRL.

The UEV domain occupies 2–145 (EFSAETLRQQ…EEELPLYSLS (144 aa)). 185-213 (GDMALACLLAVSAKGTAGKLLLLDPTDGE) contributes to the NAD(+) binding site.

In the N-terminal section; belongs to the ubiquitin-conjugating enzyme family. UEV subfamily. It in the C-terminal section; belongs to the LDH/MDH superfamily. As to quaternary structure, homodimer.

Functionally, possible negative regulator of polyubiquitination. In Xenopus tropicalis (Western clawed frog), this protein is Ubiquitin-conjugating enzyme E2 variant 3 (uevld).